We begin with the raw amino-acid sequence, 467 residues long: 55 kDa erythrocyte membrane protein (467 aa).

The PDZ domain maps to 73-154 (EVAFEKNQSE…VVTMKIIPRP (82 aa)). The region spanning 160-230 (PCEMYMRGQF…PSPELQEWRA (71 aa)) is the SH3 domain. One can recognise a Guanylate kinase-like domain in the interval 283–452 (RKTLVLIGAP…SVKIVEEALE (170 aa)).

This sequence belongs to the MAGUK family. In terms of processing, extensively palmitoylated.

The protein resides in the membrane. May play a role in the regulation of neutrophil polarization. The chain is 55 kDa erythrocyte membrane protein (mpp1) from Takifugu rubripes (Japanese pufferfish).